The sequence spans 225 residues: Cytidylate kinase (225 aa).

Residue 12-20 (GPSGAGKGT) coordinates ATP.

It belongs to the cytidylate kinase family. Type 1 subfamily.

It is found in the cytoplasm. The enzyme catalyses CMP + ATP = CDP + ADP. It carries out the reaction dCMP + ATP = dCDP + ADP. In Proteus mirabilis (strain HI4320), this protein is Cytidylate kinase.